A 403-amino-acid polypeptide reads, in one-letter code: Aspartic protease pepA (403 aa).

The signal sequence occupies residues 1-20 (MVLITQLGAALAVFSALTVA). Residues 21–67 (APTKGKARFSAPQVGIPKKAKHHPAAAYARALHKFGMKIPKAVSDAA) constitute a propeptide, activation peptide. Residues 82–400 (YVTQVTVGGS…DTQGPRIGFA (319 aa)) form the Peptidase A1 domain. The active site involves Asp-98. Residue Asn-270 is glycosylated (N-linked (GlcNAc...) asparagine). The active site involves Asp-293. A disulfide bridge connects residues Cys-329 and Cys-362.

This sequence belongs to the peptidase A1 family. Monomer.

It localises to the secreted. Its function is as follows. Secreted aspartic endopeptidase that allows assimilation of proteinaceous substrates. The scissile peptide bond is attacked by a nucleophilic water molecule activated by two aspartic residues in the active site. Shows a broad primary substrate specificity. Favors hydrophobic residues at the P1 and P1' positions. The protein is Aspartic protease pepA of Arthroderma gypseum (strain ATCC MYA-4604 / CBS 118893) (Microsporum gypseum).